Reading from the N-terminus, the 986-residue chain is Ephrin type-A receptor 4 (986 aa).

A signal peptide spans 1-19; the sequence is MAGVPVGALLPLLVGVCGA. Topologically, residues 20–547 are extracellular; that stretch reads VTGSRVYPAN…PIIGDGTNPT (528 aa). The 180-residue stretch at 30-209 folds into the Eph LBD domain; the sequence is EVTLLDSRSV…FYKKCPLTVR (180 aa). N-linked (GlcNAc...) asparagine glycans are attached at residues N235, N340, and N408. 2 Fibronectin type-III domains span residues 328-439 and 440-537; these read PPSA…TNQA and APSP…TVPS. Residues 548–569 form a helical membrane-spanning segment; it reads VLLVSVAGSVVLVVILIAAFVI. The Cytoplasmic portion of the chain corresponds to 570–986; that stretch reads SRRRSKYSKA…QQMHGRMVPV (417 aa). Phosphotyrosine; by autocatalysis occurs at positions 596 and 602. The Protein kinase domain occupies 621 to 882; sequence IKIEKVIGVG…QIVNMLDKLI (262 aa). ATP-binding positions include 627–635 and K653; that span reads IGVGEFGEV. D746 serves as the catalytic Proton acceptor. A phosphotyrosine; by autocatalysis mark is found at Y779 and Y928. The 65-residue stretch at 911 to 975 folds into the SAM domain; the sequence is SAVVSVSDWL…LSSVQAMRSQ (65 aa). The PDZ-binding signature appears at 984–986; sequence VPV.

This sequence belongs to the protein kinase superfamily. Tyr protein kinase family. Ephrin receptor subfamily. Interacts with the src family kinase, p59-Fyn, through the major phosphorylation site at position Tyr-602. Interacts (via PDZ motif) with SIPA1L1 (via PDZ domain); controls neuronal morphology through regulation of the RAP1 (RAP1A or RAP1B) and RAP2 (RAP2A, RAP2B or RAP2C) GTPases. As to expression, expressed at high levels in brain, with expression also detected in the kidney, lung, muscle and thymus.

It is found in the cell membrane. Its subcellular location is the early endosome. It carries out the reaction L-tyrosyl-[protein] + ATP = O-phospho-L-tyrosyl-[protein] + ADP + H(+). In terms of biological role, receptor tyrosine kinase which binds membrane-bound ephrin family ligands residing on adjacent cells, leading to contact-dependent bidirectional signaling into neighboring cells. The signaling pathway downstream of the receptor is referred to as forward signaling while the signaling pathway downstream of the ephrin ligand is referred to as reverse signaling. Highly promiscuous, it has the unique property among Eph receptors to bind and to be physiologically activated by both GPI-anchored ephrin-A and transmembrane ephrin-B ligands including EFNA1 and EFNB3. Upon activation by ephrin ligands, modulates cell morphology and integrin-dependent cell adhesion through regulation of the Rac, Rap and Rho GTPases activity. Plays an important role in the development of the nervous system controlling different steps of axonal guidance including the establishment of the corticospinal projections. The sequence is that of Ephrin type-A receptor 4 (EPHA4) from Gallus gallus (Chicken).